The chain runs to 153 residues: 3-hydroxyacyl-[acyl-carrier-protein] dehydratase FabZ (153 aa).

His54 is an active-site residue.

The protein belongs to the thioester dehydratase family. FabZ subfamily.

Its subcellular location is the cytoplasm. The catalysed reaction is a (3R)-hydroxyacyl-[ACP] = a (2E)-enoyl-[ACP] + H2O. Functionally, involved in unsaturated fatty acids biosynthesis. Catalyzes the dehydration of short chain beta-hydroxyacyl-ACPs and long chain saturated and unsaturated beta-hydroxyacyl-ACPs. This chain is 3-hydroxyacyl-[acyl-carrier-protein] dehydratase FabZ, found in Shewanella frigidimarina (strain NCIMB 400).